The following is a 265-amino-acid chain: MTVAKRIIPCLDVDGGRVVKGVKFVDIRDAGDPVEIARRYDAMGADEITFLDITASHERRDTMVQVVEKVASQVFIPLTVGGGIREVADIRRMLNAGADKVGINTAAVARPEFVAEAAERFGSQCIVVAVDAKQVSRADEPARWEVFTHGGRKATGLDAVEWAGRMAELGAGEILLTSMDRDGTQAGFDLALTRAVSDAVPVPVIASGGVGTLSDLADGVLEGGADAVLAASIFHFGRYTVAEAKRLMAERGITVRITGDERTDV.

Residues Asp-12 and Asp-131 contribute to the active site.

The protein belongs to the HisA/HisF family. In terms of assembly, heterodimer of HisH and HisF.

The protein localises to the cytoplasm. It catalyses the reaction 5-[(5-phospho-1-deoxy-D-ribulos-1-ylimino)methylamino]-1-(5-phospho-beta-D-ribosyl)imidazole-4-carboxamide + L-glutamine = D-erythro-1-(imidazol-4-yl)glycerol 3-phosphate + 5-amino-1-(5-phospho-beta-D-ribosyl)imidazole-4-carboxamide + L-glutamate + H(+). It participates in amino-acid biosynthesis; L-histidine biosynthesis; L-histidine from 5-phospho-alpha-D-ribose 1-diphosphate: step 5/9. IGPS catalyzes the conversion of PRFAR and glutamine to IGP, AICAR and glutamate. The HisF subunit catalyzes the cyclization activity that produces IGP and AICAR from PRFAR using the ammonia provided by the HisH subunit. The chain is Imidazole glycerol phosphate synthase subunit HisF from Alkalilimnicola ehrlichii (strain ATCC BAA-1101 / DSM 17681 / MLHE-1).